Reading from the N-terminus, the 96-residue chain is Dynein light chain roadblock-type 1 (96 aa).

A2 is modified (N-acetylalanine).

This sequence belongs to the GAMAD family. Homodimer. The cytoplasmic dynein 1 complex consists of two catalytic heavy chains (HCs) and a number of non-catalytic subunits presented by intermediate chains (ICs), light intermediate chains (LICs) and light chains (LCs); the composition seems to vary in respect to the IC, LIC and LC composition. The heavy chain homodimer serves as a scaffold for the probable homodimeric assembly of the respective non-catalytic subunits. The ICs and LICs bind directly to the HC dimer and the LCs assemble on the IC dimer. Interacts with DYNLRB2. Interacts with DYNC1I1 and DYNC1I2. Interacts with RAB6A isoform 1 (GTP-bound); the interaction is direct. Interacts with RAB6A isoform 2 (GDP-bound); the interaction is direct. Interacts with RAB6B (GDP-bound).

It localises to the cytoplasm. The protein localises to the cytoskeleton. Functionally, acts as one of several non-catalytic accessory components of the cytoplasmic dynein 1 complex that are thought to be involved in linking dynein to cargos and to adapter proteins that regulate dynein function. Cytoplasmic dynein 1 acts as a motor for the intracellular retrograde motility of vesicles and organelles along microtubules. This chain is Dynein light chain roadblock-type 1 (Dynlrb1), found in Mus musculus (Mouse).